Reading from the N-terminus, the 858-residue chain is Elongation factor 2 (858 aa).

In terms of domain architecture, tr-type G spans 17–362 (ANIRNMSVIA…MITIHLPSPV (346 aa)). 26–33 (AHVDHGKS) provides a ligand contact to GTP. Residues Thr-57 and Thr-59 each carry the phosphothreonine modification. GTP is bound by residues 158 to 161 (NKMD) and 216 to 218 (SGL). His-715 is subject to Diphthamide.

Belongs to the TRAFAC class translation factor GTPase superfamily. Classic translation factor GTPase family. EF-G/EF-2 subfamily. In terms of assembly, binds to 80S ribosomes. Actively translating ribosomes show mutually exclusive binding of eIF5a (EIF5A or EIF5A2) and EEF2/eEF2. Interacts with SERBP1; interaction sequesters EEF2/eEF2 at the A-site of the ribosome, thereby blocking the interaction sites of the mRNA-tRNA complex, promoting ribosome stabilization and hibernation. Interacts with HABP4; interaction takes place at the A-site of hibernating ribosomes and promotes ribosome stabilization. In terms of processing, phosphorylation by EF-2 kinase completely inactivates EF-2. Post-translationally, diphthamide is 2-[3-carboxyamido-3-(trimethyl-ammonio)propyl]histidine.

It is found in the cytoplasm. It localises to the nucleus. It catalyses the reaction GTP + H2O = GDP + phosphate + H(+). Functionally, catalyzes the GTP-dependent ribosomal translocation step during translation elongation. During this step, the ribosome changes from the pre-translocational (PRE) to the post-translocational (POST) state as the newly formed A-site-bound peptidyl-tRNA and P-site-bound deacylated tRNA move to the P and E sites, respectively. Catalyzes the coordinated movement of the two tRNA molecules, the mRNA and conformational changes in the ribosome. This Gallus gallus (Chicken) protein is Elongation factor 2 (EEF2).